A 207-amino-acid polypeptide reads, in one-letter code: Gap junction epsilon-1 protein (207 aa).

The Cytoplasmic portion of the chain corresponds to 1-22 (MSLNYIKNFYEGCLRPPTVIGQ). A helical transmembrane segment spans residues 23 to 43 (FHTLFFGSVRTFFLGVLGFAV). The Extracellular segment spans residues 44 to 74 (YGNEALHFSCDPDKRELNLYCYNQFRPITPQ). Intrachain disulfides connect Cys-53–Cys-161 and Cys-64–Cys-147. A helical membrane pass occupies residues 75–95 (VFWALQLVTVLVPGAVFHLYA). Residues 96–111 (ACKNIDQEEILHRPMS) lie on the Cytoplasmic side of the membrane. Residues 112 to 132 (TVFYIISVLLRIILEVLAFWL) form a helical membrane-spanning segment. Over 133–175 (QSHLFGFLVDPIFMCDVTGLGKILNVSKCMVPEHFEKTIFLSA) the chain is Extracellular. A helical membrane pass occupies residues 176–196 (MYTFTIITILLCIAEIFEILF). Over 197-207 (RRLGYLNQPMT) the chain is Cytoplasmic.

It belongs to the connexin family. Beta-type (group I) subfamily. A connexon is composed of a hexamer of connexins.

The protein resides in the cell membrane. Its function is as follows. Has significant hemichannel activity. However, has only low-efficiency gap junction activity and probably does not function as a gap junction channel in vivo. The sequence is that of Gap junction epsilon-1 protein from Danio rerio (Zebrafish).